Consider the following 363-residue polypeptide: Oxygen-dependent coproporphyrinogen-III oxidase (363 aa).

Substrate is bound at residue Ser119. A divalent metal cation contacts are provided by His123 and His133. The active-site Proton donor is the His133. Asn135–Arg137 contacts substrate. A divalent metal cation-binding residues include His167 and His197. The tract at residues Tyr287 to Glu322 is important for dimerization.

Belongs to the aerobic coproporphyrinogen-III oxidase family. As to quaternary structure, homodimer. Requires a divalent metal cation as cofactor.

Its subcellular location is the cytoplasm. It carries out the reaction coproporphyrinogen III + O2 + 2 H(+) = protoporphyrinogen IX + 2 CO2 + 2 H2O. The protein operates within porphyrin-containing compound metabolism; protoporphyrin-IX biosynthesis; protoporphyrinogen-IX from coproporphyrinogen-III (O2 route): step 1/1. Involved in the heme and chlorophyll biosynthesis. Catalyzes the aerobic oxidative decarboxylation of propionate groups of rings A and B of coproporphyrinogen-III to yield the vinyl groups in protoporphyrinogen-IX. The protein is Oxygen-dependent coproporphyrinogen-III oxidase of Parasynechococcus marenigrum (strain WH8102).